The primary structure comprises 297 residues: GTP cyclohydrolase FolE2 (297 aa).

It belongs to the GTP cyclohydrolase IV family.

It catalyses the reaction GTP + H2O = 7,8-dihydroneopterin 3'-triphosphate + formate + H(+). The protein operates within cofactor biosynthesis; 7,8-dihydroneopterin triphosphate biosynthesis; 7,8-dihydroneopterin triphosphate from GTP: step 1/1. Its function is as follows. Converts GTP to 7,8-dihydroneopterin triphosphate. In Pseudomonas fluorescens (strain ATCC BAA-477 / NRRL B-23932 / Pf-5), this protein is GTP cyclohydrolase FolE2.